Here is an 87-residue protein sequence, read N- to C-terminus: Defensin alpha-like protein 1 (87 aa).

Positions 1-19 (MKTLILLSALVLLALQVQA) are cleaved as a signal peptide. Positions 20-56 (DPIQEAEEETKTEEQPADEDQDVSVSFEGPEASAVQD) are excised as a propeptide. A compositionally biased stretch (acidic residues) spans 23–41 (QEAEEETKTEEQPADEDQD). A disordered region spans residues 23-43 (QEAEEETKTEEQPADEDQDVS).

It belongs to the alpha-defensin family. As to quaternary structure, antiparallel homodimer; disulfide-linked. Specifically expressed in small intestine (jejunum and ileum). Probably expressed by Paneth cells at the base of intestinal crypts. Coexpressed with MMP7 in small intestine.

Its subcellular location is the secreted. In terms of biological role, intestinal defense peptide. Has potent antibacterial activity against Gram-negative bacteria E.coli O157:H7, S.typhimurium DT104, and K.pneumoniae; and against Gram-positive bacteria S.aureus, methicillin-resistant S.aureus and L.monocytogenes. Remains active in the presence of NaCl and Mg(2+). Probably functions by disrupting bacterial membrane integrity. However, does not show cytotoxic activity towards human intestinal cells. In Rattus norvegicus (Rat), this protein is Defensin alpha-like protein 1.